The primary structure comprises 40 residues: MTPSLANFLWSLVWGTVIVVIPVTVGLVFISQSDKIKRNF.

The chain crosses the membrane as a helical span at residues 10 to 30 (WSLVWGTVIVVIPVTVGLVFI).

This sequence belongs to the PsbX family. Type 1 subfamily. As to quaternary structure, PSII is composed of 1 copy each of membrane proteins PsbA, PsbB, PsbC, PsbD, PsbE, PsbF, PsbH, PsbI, PsbJ, PsbK, PsbL, PsbM, PsbT, PsbX, PsbY, PsbZ, Psb30/Ycf12, peripheral proteins PsbO, CyanoQ (PsbQ), PsbU, PsbV and a large number of cofactors. It forms dimeric complexes.

The protein resides in the cellular thylakoid membrane. Its function is as follows. Involved in the binding and/or turnover of quinones at the Q(B) site of photosystem II (PSII). PSII is a light-driven water plastoquinone oxidoreductase, using light energy to abstract electrons from H(2)O, generating a proton gradient subsequently used for ATP formation. The protein is Photosystem II reaction center protein X of Crocosphaera subtropica (strain ATCC 51142 / BH68) (Cyanothece sp. (strain ATCC 51142)).